We begin with the raw amino-acid sequence, 161 residues long: MSLIPNFFGGRRNNVFDPFSLDVWDPFKDFPFPNTLSSASFPEFSRENSAFVSTRVDWKETPEAHVFKADIPGLKKEEVKVQIEDDKVLQISGERNVEKEDKNDTWHRVERSSGKFMRRFRLPENAKVEQVKASMENGVLTVTVPKEEVKKPDVKAIEISG.

Residues 47–161 (ENSAFVSTRV…PDVKAIEISG (115 aa)) form the sHSP domain.

Belongs to the small heat shock protein (HSP20) family. As to quaternary structure, forms oligomeric structures.

It localises to the cytoplasm. The polypeptide is 18.5 kDa class I heat shock protein (HSP18.5-C) (Glycine max (Soybean)).